A 266-amino-acid polypeptide reads, in one-letter code: Ras-like protein family member 12 (266 aa).

Residues 27-34 (GRRGAGKS), 74-78 (DTADL), and 134-137 (NKLD) contribute to the GTP site.

The protein belongs to the small GTPase superfamily. Ras family.

It catalyses the reaction GTP + H2O = GDP + phosphate + H(+). The polypeptide is Ras-like protein family member 12 (Rasl12) (Mus musculus (Mouse)).